The chain runs to 215 residues: MVAVRAWSVVVPAKRLPLAKTRLRPLPEGLDGPPDAHDRLVLALLADTVAAALSSPAVTGVLVVTDDPAAAAEVTRLGARTVPDEPGRGLNPALEHGARATGGRAVAALSSDLPALRPEELTAALAAAEAAPRCFVPDAQGTGTTLLTAAGTDLSPAFGTGSAQRHAAGGAVALTGAWPGLERDVDTPGDLRGALALGVGPHTAALLGGAARPTG.

Phosphoenolpyruvate is bound by residues T144, G159, and S162.

The protein belongs to the CofC family.

It catalyses the reaction phosphoenolpyruvate + GTP + H(+) = enolpyruvoyl-2-diphospho-5'-guanosine + diphosphate. Its pathway is cofactor biosynthesis; coenzyme F420 biosynthesis. Guanylyltransferase that catalyzes the activation of phosphoenolpyruvate (PEP) as enolpyruvoyl-2-diphospho-5'-guanosine, via the condensation of PEP with GTP. It is involved in the biosynthesis of coenzyme F420, a hydride carrier cofactor. This is Phosphoenolpyruvate guanylyltransferase from Geodermatophilus obscurus (strain ATCC 25078 / DSM 43160 / JCM 3152 / CCUG 61914 / KCC A-0152 / KCTC 9177 / NBRC 13315 / NRRL B-3577 / G-20).